The primary structure comprises 423 residues: Adenylosuccinate synthetase (423 aa).

Residues 12–18 (GDEGKGK) and 40–42 (GHT) each bind GTP. Asp-13 (proton acceptor) is an active-site residue. 2 residues coordinate Mg(2+): Asp-13 and Gly-40. Residues 13 to 16 (DEGK), 38 to 41 (NAGH), Thr-129, Arg-143, Gln-224, Thr-239, and Arg-303 each bind IMP. His-41 (proton donor) is an active-site residue. 299-305 (SVTGRQR) is a substrate binding site. GTP is bound by residues Arg-305, 331 to 333 (KGD), and 412 to 414 (SVG).

It belongs to the adenylosuccinate synthetase family. In terms of assembly, homodimer. The cofactor is Mg(2+).

The protein resides in the cytoplasm. It catalyses the reaction IMP + L-aspartate + GTP = N(6)-(1,2-dicarboxyethyl)-AMP + GDP + phosphate + 2 H(+). The protein operates within purine metabolism; AMP biosynthesis via de novo pathway; AMP from IMP: step 1/2. Plays an important role in the de novo pathway of purine nucleotide biosynthesis. Catalyzes the first committed step in the biosynthesis of AMP from IMP. The sequence is that of Adenylosuccinate synthetase from Flavobacterium johnsoniae (strain ATCC 17061 / DSM 2064 / JCM 8514 / BCRC 14874 / CCUG 350202 / NBRC 14942 / NCIMB 11054 / UW101) (Cytophaga johnsonae).